The chain runs to 299 residues: Protease HtpX homolog (299 aa).

2 helical membrane-spanning segments follow: residues 5–25 and 44–64; these read IFLF…VLSV and MVAL…MSLA. Residue histidine 155 coordinates Zn(2+). Glutamate 156 is an active-site residue. Histidine 159 provides a ligand contact to Zn(2+). Helical transmembrane passes span 170-190 and 205-225; these read LLQG…AWIA and FIAV…VVFA. Position 231 (glutamate 231) interacts with Zn(2+).

It belongs to the peptidase M48B family. Zn(2+) serves as cofactor.

Its subcellular location is the cell membrane. This Bacillus pumilus (strain SAFR-032) protein is Protease HtpX homolog.